Here is a 737-residue protein sequence, read N- to C-terminus: Amino-acid acetyltransferase, mitochondrial (737 aa).

The transit peptide at 1-47 (MSRSTVLGWCTQSCRLLQKHDHSFSFPTFNGSPPLKKRRFCDSAAPA) directs the protein to the mitochondrion. A disordered region spans residues 43 to 78 (SAAPAAPRPSIHRPSEYIPHSKSGGEAPQDLGHKAR). The 170-residue stretch at 558 to 727 (GEPALTLDDP…YEGVCRAIEP (170 aa)) folds into the N-acetyltransferase domain.

It belongs to the acetyltransferase family.

It is found in the mitochondrion. The enzyme catalyses L-glutamate + acetyl-CoA = N-acetyl-L-glutamate + CoA + H(+). Its pathway is amino-acid biosynthesis; L-arginine biosynthesis; N(2)-acetyl-L-ornithine from L-glutamate: step 1/4. In terms of biological role, N-acetylglutamate synthase involved in arginine biosynthesis. This Coccidioides immitis (strain RS) (Valley fever fungus) protein is Amino-acid acetyltransferase, mitochondrial (ARG2).